Reading from the N-terminus, the 231-residue chain is Monothiol glutaredoxin-6 (231 aa).

The signal sequence occupies residues 1-29 (MIPSNKRNARILSITTLLLLLVFFVAQNA). Positions 116–219 (QKEYSLILDL…ESLQVWSDGK (104 aa)) constitute a Glutaredoxin domain. Cysteine 136 is a binding site for [2Fe-2S] cluster.

The protein belongs to the glutaredoxin family. Monothiol subfamily.

It is found in the vacuole. This Saccharomyces cerevisiae (strain ATCC 204508 / S288c) (Baker's yeast) protein is Monothiol glutaredoxin-6 (GRX6).